A 313-amino-acid chain; its full sequence is Tyrosine recombinase XerD (313 aa).

The 86-residue stretch at 17–102 (EDNDVIIEQF…TLRRFFQYLY (86 aa)) folds into the Core-binding (CB) domain. Residues 123-307 (RLPKDLSEQQ…ATERLKVLHQ (185 aa)) form the Tyr recombinase domain. Residues Arg-163, Lys-187, His-259, Arg-262, and His-285 contribute to the active site. The active-site O-(3'-phospho-DNA)-tyrosine intermediate is Tyr-294.

The protein belongs to the 'phage' integrase family. XerD subfamily. As to quaternary structure, forms a cyclic heterotetrameric complex composed of two molecules of XerC and two molecules of XerD, in which XerC interacts with XerD via its C-terminal region, XerD interacts with XerC via its C-terminal region and so on.

It is found in the cytoplasm. With respect to regulation, ftsK may regulate the catalytic switch between XerC and XerD in the heterotetrameric complex during the two steps of the recombination process. Site-specific tyrosine recombinase, which acts by catalyzing the cutting and rejoining of the recombining DNA molecules. Binds cooperatively to specific DNA consensus sequences that are separated from XerC binding sites by a short central region, forming the heterotetrameric XerC-XerD complex that recombines DNA substrates. The complex is essential to convert dimers of the bacterial chromosome into monomers to permit their segregation at cell division. It also contributes to the segregational stability of plasmids. In the complex XerD specifically exchanges the bottom DNA strands. The protein is Tyrosine recombinase XerD of Proteus mirabilis.